We begin with the raw amino-acid sequence, 90 residues long: Probable Fe(2+)-trafficking protein (90 aa).

This sequence belongs to the Fe(2+)-trafficking protein family.

Functionally, could be a mediator in iron transactions between iron acquisition and iron-requiring processes, such as synthesis and/or repair of Fe-S clusters in biosynthetic enzymes. This chain is Probable Fe(2+)-trafficking protein, found in Laribacter hongkongensis (strain HLHK9).